Here is a 181-residue protein sequence, read N- to C-terminus: Adenine phosphoribosyltransferase (181 aa).

The protein belongs to the purine/pyrimidine phosphoribosyltransferase family. Homodimer.

It localises to the cytoplasm. It carries out the reaction AMP + diphosphate = 5-phospho-alpha-D-ribose 1-diphosphate + adenine. The protein operates within purine metabolism; AMP biosynthesis via salvage pathway; AMP from adenine: step 1/1. Its function is as follows. Catalyzes a salvage reaction resulting in the formation of AMP, that is energically less costly than de novo synthesis. This is Adenine phosphoribosyltransferase from Methylobacterium radiotolerans (strain ATCC 27329 / DSM 1819 / JCM 2831 / NBRC 15690 / NCIMB 10815 / 0-1).